The sequence spans 195 residues: Orotate phosphoribosyltransferase (195 aa).

5-phospho-alpha-D-ribose 1-diphosphate is bound by residues Arg-87, Lys-91, and 112-120 (DDVATTGGS). Orotate is bound by residues Thr-116 and Arg-144.

It belongs to the purine/pyrimidine phosphoribosyltransferase family. PyrE subfamily. Homodimer. Mg(2+) is required as a cofactor.

The enzyme catalyses orotidine 5'-phosphate + diphosphate = orotate + 5-phospho-alpha-D-ribose 1-diphosphate. It functions in the pathway pyrimidine metabolism; UMP biosynthesis via de novo pathway; UMP from orotate: step 1/2. Functionally, catalyzes the transfer of a ribosyl phosphate group from 5-phosphoribose 1-diphosphate to orotate, leading to the formation of orotidine monophosphate (OMP). This Sulfurisphaera tokodaii (strain DSM 16993 / JCM 10545 / NBRC 100140 / 7) (Sulfolobus tokodaii) protein is Orotate phosphoribosyltransferase.